A 130-amino-acid polypeptide reads, in one-letter code: Small ribosomal subunit protein uS8A (130 aa).

This sequence belongs to the universal ribosomal protein uS8 family. As to quaternary structure, component of the small ribosomal subunit (SSU). Mature yeast ribosomes consist of a small (40S) and a large (60S) subunit. The 40S small subunit contains 1 molecule of ribosomal RNA (18S rRNA) and at least 33 different proteins. The large 60S subunit contains 3 rRNA molecules (25S, 5.8S and 5S rRNA) and at least 46 different proteins.

It localises to the cytoplasm. The protein localises to the nucleus. Functionally, component of the ribosome, a large ribonucleoprotein complex responsible for the synthesis of proteins in the cell. The small ribosomal subunit (SSU) binds messenger RNAs (mRNAs) and translates the encoded message by selecting cognate aminoacyl-transfer RNA (tRNA) molecules. The large subunit (LSU) contains the ribosomal catalytic site termed the peptidyl transferase center (PTC), which catalyzes the formation of peptide bonds, thereby polymerizing the amino acids delivered by tRNAs into a polypeptide chain. The nascent polypeptides leave the ribosome through a tunnel in the LSU and interact with protein factors that function in enzymatic processing, targeting, and the membrane insertion of nascent chains at the exit of the ribosomal tunnel. The sequence is that of Small ribosomal subunit protein uS8A (rps2201) from Schizosaccharomyces pombe (strain 972 / ATCC 24843) (Fission yeast).